The chain runs to 497 residues: Glycerol kinase (497 aa).

Thr11 contributes to the ADP binding site. ATP-binding residues include Thr11, Ser12, and Ser13. Thr11 contacts sn-glycerol 3-phosphate. Position 15 (Arg15) interacts with ADP. Arg81, Glu82, Tyr133, and Asp242 together coordinate sn-glycerol 3-phosphate. Arg81, Glu82, Tyr133, Asp242, and Gln243 together coordinate glycerol. The ADP site is built by Thr264 and Gly307. The ATP site is built by Thr264, Gly307, Gln311, and Gly412. Positions 412 and 416 each coordinate ADP.

The protein belongs to the FGGY kinase family.

It carries out the reaction glycerol + ATP = sn-glycerol 3-phosphate + ADP + H(+). Its pathway is polyol metabolism; glycerol degradation via glycerol kinase pathway; sn-glycerol 3-phosphate from glycerol: step 1/1. Inhibited by fructose 1,6-bisphosphate (FBP). Key enzyme in the regulation of glycerol uptake and metabolism. Catalyzes the phosphorylation of glycerol to yield sn-glycerol 3-phosphate. The polypeptide is Glycerol kinase (Leptothrix cholodnii (strain ATCC 51168 / LMG 8142 / SP-6) (Leptothrix discophora (strain SP-6))).